The sequence spans 346 residues: Phosphoribosylformylglycinamidine cyclo-ligase (346 aa).

This sequence belongs to the AIR synthase family.

The protein resides in the cytoplasm. It carries out the reaction 2-formamido-N(1)-(5-O-phospho-beta-D-ribosyl)acetamidine + ATP = 5-amino-1-(5-phospho-beta-D-ribosyl)imidazole + ADP + phosphate + H(+). It participates in purine metabolism; IMP biosynthesis via de novo pathway; 5-amino-1-(5-phospho-D-ribosyl)imidazole from N(2)-formyl-N(1)-(5-phospho-D-ribosyl)glycinamide: step 2/2. The polypeptide is Phosphoribosylformylglycinamidine cyclo-ligase (Vibrio parahaemolyticus serotype O3:K6 (strain RIMD 2210633)).